Reading from the N-terminus, the 387-residue chain is MALQVQAALLPSALSVPKKGNLSAVVKEPGFLSVSQKAKKPSLVVRAVATPAAPVASPGAGTSKADGKKTLRQGVVVITGASSGLGLAAAKALAETGKWHVVMACRDFLKAATAAKAAGMAAGSYTVMHLDLASLDSVRQFVDNFRRSGMPLDALVCNAAIYRPTARQPTFTADGYEMSVGVNHLGHFLLARLMLDDLKKSDYPSRRLIILGSITGNTNTLAGNVPPKAGLGDLRGLAGGLRGQNGSAMIDGAESFDGAKAYKDSKICNMLTMQEFHRRFHEETGITFASLYPGCIATTGLFREHIPLFRLLFPPFQRFVTKGFVSEAESGKRLAQVVGDPSLTKSGVYWSWNKDSASFENQLSQEASDPEKARKLWDLSEKLVGLV.

The transit peptide at 1–35 directs the protein to the chloroplast; sequence MALQVQAALLPSALSVPKKGNLSAVVKEPGFLSVS.

The protein belongs to the short-chain dehydrogenases/reductases (SDR) family. POR subfamily.

The protein localises to the plastid. The protein resides in the chloroplast. The enzyme catalyses chlorophyllide a + NADP(+) = protochlorophyllide a + NADPH + H(+). It participates in porphyrin-containing compound metabolism; chlorophyll biosynthesis. Phototransformation of protochlorophyllide (Pchlide) to chlorophyllide (Chlide). This is Protochlorophyllide reductase A, chloroplastic (PORA) from Oryza sativa subsp. japonica (Rice).